Consider the following 313-residue polypeptide: Cytochrome f (313 aa).

Positions 1 to 31 are cleaved as a signal peptide; the sequence is MQNMFSFLSNKKIIALFLIIGTIFMPLSSEA. Tyrosine 32, cysteine 52, cysteine 55, and histidine 56 together coordinate heme. The chain crosses the membrane as a helical span at residues 279–298; it reads IKWLIAFLILSTLGQVFLVL.

The protein belongs to the cytochrome f family. The 4 large subunits of the cytochrome b6-f complex are cytochrome b6, subunit IV (17 kDa polypeptide, petD), cytochrome f and the Rieske protein, while the 4 small subunits are PetG, PetL, PetM and PetN. The complex functions as a dimer. Requires heme as cofactor.

It is found in the plastid. The protein localises to the chloroplast thylakoid membrane. Functionally, component of the cytochrome b6-f complex, which mediates electron transfer between photosystem II (PSII) and photosystem I (PSI), cyclic electron flow around PSI, and state transitions. The polypeptide is Cytochrome f (petA) (Mesostigma viride (Green alga)).